The chain runs to 473 residues: ATP synthase subunit beta (473 aa).

158-165 (GGAGVGKT) serves as a coordination point for ATP.

This sequence belongs to the ATPase alpha/beta chains family. F-type ATPases have 2 components, CF(1) - the catalytic core - and CF(0) - the membrane proton channel. CF(1) has five subunits: alpha(3), beta(3), gamma(1), delta(1), epsilon(1). CF(0) has three main subunits: a(1), b(2) and c(9-12). The alpha and beta chains form an alternating ring which encloses part of the gamma chain. CF(1) is attached to CF(0) by a central stalk formed by the gamma and epsilon chains, while a peripheral stalk is formed by the delta and b chains.

It localises to the cell membrane. The catalysed reaction is ATP + H2O + 4 H(+)(in) = ADP + phosphate + 5 H(+)(out). In terms of biological role, produces ATP from ADP in the presence of a proton gradient across the membrane. The catalytic sites are hosted primarily by the beta subunits. This is ATP synthase subunit beta from Geobacillus kaustophilus (strain HTA426).